A 166-amino-acid chain; its full sequence is Bacterial non-heme ferritin (166 aa).

Positions 2–145 (LSKNLLEALN…THINYLTRIG (144 aa)) constitute a Ferritin-like diiron domain. The Fe cation site is built by glutamate 17, glutamate 50, histidine 53, glutamate 94, and glutamine 127.

Belongs to the ferritin family. Prokaryotic subfamily.

Its subcellular location is the cytoplasm. The enzyme catalyses 4 Fe(2+) + O2 + 6 H2O = 4 iron(III) oxide-hydroxide + 12 H(+). Its function is as follows. Iron-storage protein. This Staphylococcus aureus (strain MRSA252) protein is Bacterial non-heme ferritin (ftnA).